Reading from the N-terminus, the 275-residue chain is Large ribosomal subunit protein uL2 (275 aa).

Positions A224 to G275 are disordered.

It belongs to the universal ribosomal protein uL2 family. In terms of assembly, part of the 50S ribosomal subunit. Forms a bridge to the 30S subunit in the 70S ribosome.

One of the primary rRNA binding proteins. Required for association of the 30S and 50S subunits to form the 70S ribosome, for tRNA binding and peptide bond formation. It has been suggested to have peptidyltransferase activity; this is somewhat controversial. Makes several contacts with the 16S rRNA in the 70S ribosome. The polypeptide is Large ribosomal subunit protein uL2 (Xanthomonas axonopodis pv. citri (strain 306)).